The primary structure comprises 673 residues: MEFKIVNTICPYCGVGCGLGLVVKDGRVIGIHPNKRHPINEGKLCAKGNYCYQFIHSKDRLTKPLIKKESGFVETTWNKALEVIAENLKTYKDEIGFFSSARCTNEDNYILQKFARVALKTNNIDHCARLUHSATVTGMSACFGSGAMTNSIEDIELADCILIIGSNTFEQHPLIARRIMRAKDKGAKIIVIDPRRTITAKNSDIYLQIIPGTNVALINAMINVIIKENLIDKEFIKNRTEGFEKLKEIIKKYTPEYASKICGVDKELIIESAKIYGNAERASIIYCMGVTQFTHGVDAVKALCNLAMITGNIGKEGTGVNPLRGQNNVQGACDMGALPNVFPGYQKVEDGYKLFEEYWKTDLNPNSGLTIPEMIDESGKNIKFLYIMGENPIVSDPDVKHVEKALKSLDFLVVQDIFLTETAKLADVVLPAACWAEKDGTFTNTERRVQLIRKAVNPPGEALEDWIIIKKLAEKLGYGDKFNYNKVEDIFNEIRKVTPQYRGITYKRLKIDGIHWPCLDENHSGTKILHKDKFLTDNGRGKIFPVEYREVAELPDKDYPFILTTGRIIFHYHTGTMTRRCKNLVEEINEPFIEINPDDAKSLKIENGDLVKVISRRGEITAKARITEDIKKGVVFMPFHFVEANPNVLTNTALDELCKIPELKVCAVKIERI.

In terms of domain architecture, 4Fe-4S Mo/W bis-MGD-type spans 3–59 (FKIVNTICPYCGVGCGLGLVVKDGRVIGIHPNKRHPINEGKLCAKGNYCYQFIHSKD). Positions 10, 13, 17, and 45 each coordinate [4Fe-4S] cluster. Residue Sec131 is a non-standard amino acid, selenocysteine.

Belongs to the prokaryotic molybdopterin-containing oxidoreductase family. Dimer of an alpha (FdhA) and a beta (FdhB) subunit. The cofactor is [4Fe-4S] cluster. Mo-bis(molybdopterin guanine dinucleotide) serves as cofactor. It depends on Zn(2+) as a cofactor.

The catalysed reaction is oxidized coenzyme F420-(gamma-L-Glu)(n) + formate + 2 H(+) = reduced coenzyme F420-(gamma-L-Glu)(n) + CO2. In terms of biological role, catalyzes the oxidation of formate to carbon dioxide, with coenzyme F420 as the electron acceptor. This Methanocaldococcus jannaschii (strain ATCC 43067 / DSM 2661 / JAL-1 / JCM 10045 / NBRC 100440) (Methanococcus jannaschii) protein is F420-dependent formate dehydrogenase subunit alpha (fdhA).